Here is a 183-residue protein sequence, read N- to C-terminus: Small ribosomal subunit protein uS4c (183 aa).

The region spanning 82 to 143 (MRLDNILFRL…KQRSKALIQN (62 aa)) is the S4 RNA-binding domain.

It belongs to the universal ribosomal protein uS4 family. In terms of assembly, part of the 30S ribosomal subunit. Contacts protein S5. The interaction surface between S4 and S5 is involved in control of translational fidelity.

It is found in the plastid. It localises to the chloroplast. In terms of biological role, one of the primary rRNA binding proteins, it binds directly to 16S rRNA where it nucleates assembly of the body of the 30S subunit. With S5 and S12 plays an important role in translational accuracy. The polypeptide is Small ribosomal subunit protein uS4c (rps4) (Freesia sp. (strain Lejeune 1997)).